A 406-amino-acid polypeptide reads, in one-letter code: Serine hydroxymethyltransferase (406 aa).

(6S)-5,6,7,8-tetrahydrofolate contacts are provided by residues Leu111 and 115–117; that span reads GHL. N6-(pyridoxal phosphate)lysine is present on Lys220.

The protein belongs to the SHMT family. Homodimer. Pyridoxal 5'-phosphate is required as a cofactor.

The protein localises to the cytoplasm. The enzyme catalyses (6R)-5,10-methylene-5,6,7,8-tetrahydrofolate + glycine + H2O = (6S)-5,6,7,8-tetrahydrofolate + L-serine. It participates in one-carbon metabolism; tetrahydrofolate interconversion. It functions in the pathway amino-acid biosynthesis; glycine biosynthesis; glycine from L-serine: step 1/1. Functionally, catalyzes the reversible interconversion of serine and glycine with tetrahydrofolate (THF) serving as the one-carbon carrier. This reaction serves as the major source of one-carbon groups required for the biosynthesis of purines, thymidylate, methionine, and other important biomolecules. Also exhibits THF-independent aldolase activity toward beta-hydroxyamino acids, producing glycine and aldehydes, via a retro-aldol mechanism. The chain is Serine hydroxymethyltransferase from Mycoplasma pneumoniae (strain ATCC 29342 / M129 / Subtype 1) (Mycoplasmoides pneumoniae).